The primary structure comprises 567 residues: Phosphoglucomutase-like protein 5 (567 aa).

The tract at residues 1–26 (MEGSPIPVLTVPTAPYEDQRPTGGGG) is disordered. Threonine 120 carries the phosphothreonine modification. Serine 122 is modified (phosphoserine).

Belongs to the phosphohexose mutase family. Interacts with DMD/dystrophin; the interaction is direct. Interacts with UTRN/utrophin.

The protein resides in the cell junction. The protein localises to the adherens junction. Its subcellular location is the cytoplasm. It localises to the cytoskeleton. It is found in the cell membrane. The protein resides in the sarcolemma. Functionally, component of adherens-type cell-cell and cell-matrix junctions. Has no phosphoglucomutase activity in vitro. The chain is Phosphoglucomutase-like protein 5 from Mus musculus (Mouse).